Reading from the N-terminus, the 282-residue chain is Ribosomal RNA small subunit methyltransferase A (282 aa).

H15, L17, G42, E64, D89, and N109 together coordinate S-adenosyl-L-methionine.

This sequence belongs to the class I-like SAM-binding methyltransferase superfamily. rRNA adenine N(6)-methyltransferase family. RsmA subfamily.

It is found in the cytoplasm. The enzyme catalyses adenosine(1518)/adenosine(1519) in 16S rRNA + 4 S-adenosyl-L-methionine = N(6)-dimethyladenosine(1518)/N(6)-dimethyladenosine(1519) in 16S rRNA + 4 S-adenosyl-L-homocysteine + 4 H(+). In terms of biological role, specifically dimethylates two adjacent adenosines (A1518 and A1519) in the loop of a conserved hairpin near the 3'-end of 16S rRNA in the 30S particle. May play a critical role in biogenesis of 30S subunits. The polypeptide is Ribosomal RNA small subunit methyltransferase A (Prochlorococcus marinus (strain MIT 9211)).